The following is a 277-amino-acid chain: Large ribosomal subunit protein uL2 (277 aa).

The disordered stretch occupies residues 222-265; that stretch reads GVAMNPIDHPHGGGEGRTSGGRHPVTPWGKPTKGKKTRTNKSTD.

This sequence belongs to the universal ribosomal protein uL2 family. In terms of assembly, part of the 50S ribosomal subunit. Forms a bridge to the 30S subunit in the 70S ribosome.

Functionally, one of the primary rRNA binding proteins. Required for association of the 30S and 50S subunits to form the 70S ribosome, for tRNA binding and peptide bond formation. It has been suggested to have peptidyltransferase activity; this is somewhat controversial. Makes several contacts with the 16S rRNA in the 70S ribosome. The protein is Large ribosomal subunit protein uL2 of Bradyrhizobium sp. (strain BTAi1 / ATCC BAA-1182).